Reading from the N-terminus, the 146-residue chain is NADH-quinone oxidoreductase subunit A (146 aa).

A run of 3 helical transmembrane segments spans residues 4 to 24 (IYHW…VFML), 63 to 83 (LIAM…AWAI), and 91 to 111 (IGFS…IYLI).

This sequence belongs to the complex I subunit 3 family. As to quaternary structure, NDH-1 is composed of 13 different subunits. Subunits NuoA, H, J, K, L, M, N constitute the membrane sector of the complex.

The protein localises to the cell inner membrane. It catalyses the reaction a quinone + NADH + 5 H(+)(in) = a quinol + NAD(+) + 4 H(+)(out). NDH-1 shuttles electrons from NADH, via FMN and iron-sulfur (Fe-S) centers, to quinones in the respiratory chain. The immediate electron acceptor for the enzyme in this species is believed to be ubiquinone. Couples the redox reaction to proton translocation (for every two electrons transferred, four hydrogen ions are translocated across the cytoplasmic membrane), and thus conserves the redox energy in a proton gradient. The sequence is that of NADH-quinone oxidoreductase subunit A from Blochmanniella pennsylvanica (strain BPEN).